The following is a 237-amino-acid chain: Phosphoribosylaminoimidazole-succinocarboxamide synthase (237 aa).

This sequence belongs to the SAICAR synthetase family.

The enzyme catalyses 5-amino-1-(5-phospho-D-ribosyl)imidazole-4-carboxylate + L-aspartate + ATP = (2S)-2-[5-amino-1-(5-phospho-beta-D-ribosyl)imidazole-4-carboxamido]succinate + ADP + phosphate + 2 H(+). The protein operates within purine metabolism; IMP biosynthesis via de novo pathway; 5-amino-1-(5-phospho-D-ribosyl)imidazole-4-carboxamide from 5-amino-1-(5-phospho-D-ribosyl)imidazole-4-carboxylate: step 1/2. In Pectobacterium atrosepticum (strain SCRI 1043 / ATCC BAA-672) (Erwinia carotovora subsp. atroseptica), this protein is Phosphoribosylaminoimidazole-succinocarboxamide synthase.